Consider the following 127-residue polypeptide: Fluoride-specific ion channel FluC (127 aa).

The next 4 helical transmembrane spans lie at 4–24, 35–55, 71–91, and 103–123; these read TLLA…QLGV, LGTL…LAFF, TGLC…IMFL, and VLLN…LVTW. Positions 75 and 78 each coordinate Na(+).

This sequence belongs to the fluoride channel Fluc/FEX (TC 1.A.43) family.

The protein resides in the cell inner membrane. It carries out the reaction fluoride(in) = fluoride(out). Its activity is regulated as follows. Na(+) is not transported, but it plays an essential structural role and its presence is essential for fluoride channel function. Its function is as follows. Fluoride-specific ion channel. Important for reducing fluoride concentration in the cell, thus reducing its toxicity. This is Fluoride-specific ion channel FluC from Pectobacterium carotovorum subsp. carotovorum (strain PC1).